The sequence spans 237 residues: Phosphatidylserine decarboxylase proenzyme (237 aa).

Ser-206 acts as the Schiff-base intermediate with substrate; via pyruvic acid in catalysis. Ser-206 carries the post-translational modification Pyruvic acid (Ser); by autocatalysis.

Belongs to the phosphatidylserine decarboxylase family. PSD-A subfamily. In terms of assembly, heterodimer of a large membrane-associated beta subunit and a small pyruvoyl-containing alpha subunit. Requires pyruvate as cofactor. In terms of processing, is synthesized initially as an inactive proenzyme. Formation of the active enzyme involves a self-maturation process in which the active site pyruvoyl group is generated from an internal serine residue via an autocatalytic post-translational modification. Two non-identical subunits are generated from the proenzyme in this reaction, and the pyruvate is formed at the N-terminus of the alpha chain, which is derived from the carboxyl end of the proenzyme. The post-translation cleavage follows an unusual pathway, termed non-hydrolytic serinolysis, in which the side chain hydroxyl group of the serine supplies its oxygen atom to form the C-terminus of the beta chain, while the remainder of the serine residue undergoes an oxidative deamination to produce ammonia and the pyruvoyl prosthetic group on the alpha chain.

It is found in the cell membrane. It catalyses the reaction a 1,2-diacyl-sn-glycero-3-phospho-L-serine + H(+) = a 1,2-diacyl-sn-glycero-3-phosphoethanolamine + CO2. It functions in the pathway phospholipid metabolism; phosphatidylethanolamine biosynthesis; phosphatidylethanolamine from CDP-diacylglycerol: step 2/2. Functionally, catalyzes the formation of phosphatidylethanolamine (PtdEtn) from phosphatidylserine (PtdSer). The sequence is that of Phosphatidylserine decarboxylase proenzyme from Rhodococcus erythropolis (strain PR4 / NBRC 100887).